We begin with the raw amino-acid sequence, 272 residues long: Tryptophan synthase alpha chain (272 aa).

Active-site proton acceptor residues include glutamate 49 and aspartate 60.

Belongs to the TrpA family. Tetramer of two alpha and two beta chains.

It catalyses the reaction (1S,2R)-1-C-(indol-3-yl)glycerol 3-phosphate + L-serine = D-glyceraldehyde 3-phosphate + L-tryptophan + H2O. The protein operates within amino-acid biosynthesis; L-tryptophan biosynthesis; L-tryptophan from chorismate: step 5/5. Its function is as follows. The alpha subunit is responsible for the aldol cleavage of indoleglycerol phosphate to indole and glyceraldehyde 3-phosphate. This Hydrogenovibrio crunogenus (strain DSM 25203 / XCL-2) (Thiomicrospira crunogena) protein is Tryptophan synthase alpha chain.